The following is a 254-amino-acid chain: Ubiquinone biosynthesis O-methyltransferase (254 aa).

Residues Arg-47, Gly-78, Asp-99, and Met-141 each coordinate S-adenosyl-L-methionine.

Belongs to the methyltransferase superfamily. UbiG/COQ3 family.

It catalyses the reaction a 3-demethylubiquinol + S-adenosyl-L-methionine = a ubiquinol + S-adenosyl-L-homocysteine + H(+). The catalysed reaction is a 3-(all-trans-polyprenyl)benzene-1,2-diol + S-adenosyl-L-methionine = a 2-methoxy-6-(all-trans-polyprenyl)phenol + S-adenosyl-L-homocysteine + H(+). It participates in cofactor biosynthesis; ubiquinone biosynthesis. Its function is as follows. O-methyltransferase that catalyzes the 2 O-methylation steps in the ubiquinone biosynthetic pathway. The chain is Ubiquinone biosynthesis O-methyltransferase from Rhodopseudomonas palustris (strain BisB18).